The sequence spans 455 residues: Asparagine--tRNA ligase (455 aa).

This sequence belongs to the class-II aminoacyl-tRNA synthetase family. Homodimer.

It is found in the cytoplasm. The enzyme catalyses tRNA(Asn) + L-asparagine + ATP = L-asparaginyl-tRNA(Asn) + AMP + diphosphate + H(+). This chain is Asparagine--tRNA ligase, found in Mycoplasma pneumoniae (strain ATCC 29342 / M129 / Subtype 1) (Mycoplasmoides pneumoniae).